Here is a 483-residue protein sequence, read N- to C-terminus: L-2-hydroxyglutarate dehydrogenase, mitochondrial (483 aa).

The N-terminal 67 residues, Met-1–Gly-67, are a transit peptide targeting the mitochondrion.

It belongs to the L2HGDH family. Requires FAD as cofactor.

The protein localises to the mitochondrion. The enzyme catalyses (S)-2-hydroxyglutarate + A = 2-oxoglutarate + AH2. Functionally, catalyzes the oxidation of (S)-2-hydroxyglutarate to 2-oxoglutarate. Is specific for the (S) enantiomer and possesses very poor activity toward (R)-2-hydroxyglutarate. Has no activity toward related 2-hydroxy acids, such as glycolate, L-lactate or D-lactate. This Arabidopsis thaliana (Mouse-ear cress) protein is L-2-hydroxyglutarate dehydrogenase, mitochondrial.